The sequence spans 315 residues: Olfactory receptor 52R1 (315 aa).

Residues 1 to 28 lie on the Extracellular side of the membrane; the sequence is MVLASGNSSSHPVSFILLGIPGLESFQL. N-linked (GlcNAc...) asparagine glycosylation occurs at Asn7. A helical membrane pass occupies residues 29-49; the sequence is WIAFPFCATYAVAVVGNITLL. The Cytoplasmic segment spans residues 50–57; sequence HVIRIDHT. Residues 58–78 traverse the membrane as a helical segment; sequence LHEPMYLFLAMLAITDLVLSS. The Extracellular segment spans residues 79 to 102; the sequence is STQPKMLAIFWFHAHEIQYHACLI. An intrachain disulfide couples Cys100 to Cys192. The helical transmembrane segment at 103–123 threads the bilayer; sequence QVFFIHAFSSVESGVLMAMAL. Topologically, residues 124–142 are cytoplasmic; that stretch reads DCYVAICFPLRHSSILTPS. A helical membrane pass occupies residues 143-163; sequence VVIKLGTIVMLRGLLWVSPFC. At 164–199 the chain is on the extracellular side; that stretch reads FMVSRMPFCQHQAIPQSYCEHMAVLKLVCADTSISR. A helical transmembrane segment spans residues 200–220; sequence GNGLFVAFSVAGFDMIVIGMS. Topologically, residues 221-240 are cytoplasmic; that stretch reads YVMILRAVLQLPSGEARLKA. The chain crosses the membrane as a helical span at residues 241 to 261; the sequence is FSTRSSHICVILALYIPALFS. Topologically, residues 262–276 are extracellular; it reads FLTYRFGHDVPRVVH. The chain crosses the membrane as a helical span at residues 277-297; it reads ILFANLYLLIPPMLNPIIYGV. Residues 298–315 are Cytoplasmic-facing; it reads RTKQIGDRVIQGCCGNIP.

It belongs to the G-protein coupled receptor 1 family.

The protein resides in the cell membrane. Odorant receptor. In Homo sapiens (Human), this protein is Olfactory receptor 52R1 (OR52R1).